The primary structure comprises 436 residues: Putative F-box/FBD/LRR-repeat protein At5g44960 (436 aa).

The F-box domain maps to 4–50 (CDYINELPDSLLTQILLDLRTKDSVKTSVSSKRWRNLWLNVPGLDLF). LRR repeat units follow at residues 287-310 (ISSV…SKLG) and 397-420 (SAVL…SYKK). One can recognise an FBD domain in the interval 355 to 407 (EENIDFHEVPQCLISTLEYVHINKLMMMEQSGIKLVNYFIENSAVLKKLTLRF).

This Arabidopsis thaliana (Mouse-ear cress) protein is Putative F-box/FBD/LRR-repeat protein At5g44960.